A 202-amino-acid chain; its full sequence is GTP-binding protein rho1 (202 aa).

13-20 (GDGACGKT) provides a ligand contact to GTP. An Effector region motif is present at residues 35–43 (YVPTVFENY). GTP is bound by residues 60-64 (DTAGQ) and 118-121 (CKAD). C199 is subject to Cysteine methyl ester. Residue C199 is the site of S-geranylgeranyl cysteine attachment. The propeptide at 200–202 (ILL) is removed in mature form.

It belongs to the small GTPase superfamily. Rho family.

The protein resides in the cell membrane. Its function is as follows. Involved in the regulation of cell wall growth and actin cytoskeleton organization. Activates (1,3)-beta-D-glucan synthase. This is GTP-binding protein rho1 (rho1) from Schizosaccharomyces pombe (strain 972 / ATCC 24843) (Fission yeast).